The primary structure comprises 472 residues: 3-isopropylmalate dehydratase large subunit (472 aa).

Residues Cys-347, Cys-407, and Cys-410 each contribute to the [4Fe-4S] cluster site.

The protein belongs to the aconitase/IPM isomerase family. LeuC type 1 subfamily. In terms of assembly, heterodimer of LeuC and LeuD. [4Fe-4S] cluster serves as cofactor.

It carries out the reaction (2R,3S)-3-isopropylmalate = (2S)-2-isopropylmalate. The protein operates within amino-acid biosynthesis; L-leucine biosynthesis; L-leucine from 3-methyl-2-oxobutanoate: step 2/4. Catalyzes the isomerization between 2-isopropylmalate and 3-isopropylmalate, via the formation of 2-isopropylmaleate. The sequence is that of 3-isopropylmalate dehydratase large subunit from Synechococcus sp. (strain WH7803).